Reading from the N-terminus, the 388-residue chain is Succinate--CoA ligase [ADP-forming] subunit beta (388 aa).

The 236-residue stretch at 9-244 (KSLFAEYGLP…PSQDDAREAH (236 aa)) folds into the ATP-grasp domain. ATP contacts are provided by residues lysine 46, 53–55 (GRG), glutamate 99, threonine 102, and glutamate 107. Residues asparagine 199 and aspartate 213 each coordinate Mg(2+). Residues asparagine 264 and 321–323 (GIV) contribute to the substrate site.

Belongs to the succinate/malate CoA ligase beta subunit family. As to quaternary structure, heterotetramer of two alpha and two beta subunits. The cofactor is Mg(2+).

It carries out the reaction succinate + ATP + CoA = succinyl-CoA + ADP + phosphate. The catalysed reaction is GTP + succinate + CoA = succinyl-CoA + GDP + phosphate. Its pathway is carbohydrate metabolism; tricarboxylic acid cycle; succinate from succinyl-CoA (ligase route): step 1/1. In terms of biological role, succinyl-CoA synthetase functions in the citric acid cycle (TCA), coupling the hydrolysis of succinyl-CoA to the synthesis of either ATP or GTP and thus represents the only step of substrate-level phosphorylation in the TCA. The beta subunit provides nucleotide specificity of the enzyme and binds the substrate succinate, while the binding sites for coenzyme A and phosphate are found in the alpha subunit. The polypeptide is Succinate--CoA ligase [ADP-forming] subunit beta (Shewanella baltica (strain OS195)).